The chain runs to 285 residues: Ribose-phosphate pyrophosphokinase (285 aa).

ATP is bound by residues 33–35 and 91–92; these read DGE and RQ. Positions 125 and 162 each coordinate Mg(2+). Residue lysine 185 is part of the active site. Residues arginine 187, aspartate 211, and 215–219 each bind D-ribose 5-phosphate; that span reads STGGT.

It belongs to the ribose-phosphate pyrophosphokinase family. Class III (archaeal) subfamily. It depends on Mg(2+) as a cofactor.

It is found in the cytoplasm. It catalyses the reaction D-ribose 5-phosphate + ATP = 5-phospho-alpha-D-ribose 1-diphosphate + AMP + H(+). Its pathway is metabolic intermediate biosynthesis; 5-phospho-alpha-D-ribose 1-diphosphate biosynthesis; 5-phospho-alpha-D-ribose 1-diphosphate from D-ribose 5-phosphate (route I): step 1/1. Its function is as follows. Involved in the biosynthesis of the central metabolite phospho-alpha-D-ribosyl-1-pyrophosphate (PRPP) via the transfer of pyrophosphoryl group from ATP to 1-hydroxyl of ribose-5-phosphate (Rib-5-P). The chain is Ribose-phosphate pyrophosphokinase from Methanothermobacter thermautotrophicus (strain ATCC 29096 / DSM 1053 / JCM 10044 / NBRC 100330 / Delta H) (Methanobacterium thermoautotrophicum).